Here is a 152-residue protein sequence, read N- to C-terminus: uncharacterized protein (152 aa).

4 helical membrane passes run 2–22, 26–46, 92–112, and 128–148; these read ENLI…LSFL, FITF…HLIE, VVPI…FILL, and YIIT…YFLK.

Its subcellular location is the membrane. This is an uncharacterized protein from Acanthamoeba polyphaga mimivirus (APMV).